Reading from the N-terminus, the 213-residue chain is Adenylate kinase (213 aa).

Residue Gly-10–Thr-15 coordinates ATP. The interval Ser-30 to Val-59 is NMP. AMP-binding positions include Thr-31, Arg-36, Ala-57–Val-59, Gly-85–Arg-88, and Gln-92. Residues Gly-126–Asp-163 form an LID region. Arg-127 is an ATP binding site. Zn(2+) contacts are provided by Cys-130 and Cys-133. Ser-136–Tyr-137 lines the ATP pocket. 2 residues coordinate Zn(2+): Cys-150 and Cys-153. Residues Arg-160 and Arg-171 each contribute to the AMP site. Residue Gln-199 coordinates ATP.

Belongs to the adenylate kinase family. Monomer.

Its subcellular location is the cytoplasm. It carries out the reaction AMP + ATP = 2 ADP. It functions in the pathway purine metabolism; AMP biosynthesis via salvage pathway; AMP from ADP: step 1/1. Functionally, catalyzes the reversible transfer of the terminal phosphate group between ATP and AMP. Plays an important role in cellular energy homeostasis and in adenine nucleotide metabolism. The sequence is that of Adenylate kinase from Desulforamulus reducens (strain ATCC BAA-1160 / DSM 100696 / MI-1) (Desulfotomaculum reducens).